The chain runs to 181 residues: MYCLFCQHTYTRVIDSRVSEDGATIRRRRECEACGERFSTLETIELKLPVIIKKDGGREAFDGRKLRTSFDRALQKRPVAEECIEMALRAVIHRLRMAGEREVPSIVVGEYVMAELRKLDHVGYVRFASVYRSFQDVADFREEIEKLESELLVSREQLPLLEAAMESMGHPSVDQGGKHGV.

The segment at 3–34 (CLFCQHTYTRVIDSRVSEDGATIRRRRECEAC) is a zinc-finger region. In terms of domain architecture, ATP-cone spans 49-139 (PVIIKKDGGR…VYRSFQDVAD (91 aa)).

The protein belongs to the NrdR family. It depends on Zn(2+) as a cofactor.

In terms of biological role, negatively regulates transcription of bacterial ribonucleotide reductase nrd genes and operons by binding to NrdR-boxes. This chain is Transcriptional repressor NrdR, found in Xylella fastidiosa (strain 9a5c).